Consider the following 382-residue polypeptide: MSNNDETVLGHLADHVFKHSGPIPESFVEVKGIDYSKPDAIDMRASDLIKSMKTMGFQASSLGQACDIIDEMRAWRGKHIDELDEYSRKGSFDENGFQKSTIFLGYTSNLISSGLRETLRYLVQHNMVSAIVTTAGGVEEDIIKCLAPTYLGEFTLKGAALRDKGMNRIGNLLVPNNNYCKFEEWIVPILDAMLAEQEAYVAQQGKDCLGVNTDVDSPIWTPSKLCDRLGKEINDESSVLYWAHKNKIPVFCPAITDGSIGDMLFLHTFRASPQQLRLDLVADIRKINSMSMEASQAGMIILGGGLIKHHIANACLMRNGADYAVYINTGQEFDGSDAGARPDEAVSWGKIKVEAKSVKVYADVTTVFPLIVAATFANGKKN.

NAD(+)-binding positions include serine 108 to serine 112, threonine 134 to glycine 136, glutamate 140, and aspartate 257. Glutamate 139–glutamate 140 contacts spermidine. Aspartate 262 contacts spermidine. NAD(+) is bound at residue glycine 304. Histidine 309 provides a ligand contact to spermidine. An NAD(+)-binding site is contributed by threonine 329–glycine 330. Residues glycine 335–aspartate 337 and glutamate 344–lysine 350 contribute to the spermidine site. The Nucleophile role is filled by lysine 350. Aspartate 363–valine 364 serves as a coordination point for NAD(+).

The protein belongs to the deoxyhypusine synthase family. NAD(+) is required as a cofactor.

The enzyme catalyses [eIF5A protein]-L-lysine + spermidine = [eIF5A protein]-deoxyhypusine + propane-1,3-diamine. Its pathway is protein modification; eIF5A hypusination. In terms of biological role, catalyzes the NAD-dependent oxidative cleavage of spermidine and the subsequent transfer of the butylamine moiety of spermidine to the epsilon-amino group of a specific lysine residue of the eIF-5A precursor protein to form the intermediate deoxyhypusine residue. This chain is Deoxyhypusine synthase (DYS1), found in Eremothecium gossypii (strain ATCC 10895 / CBS 109.51 / FGSC 9923 / NRRL Y-1056) (Yeast).